The chain runs to 405 residues: Elongation factor Tu (405 aa).

Residues 10-213 (KEHVNVGTIG…AMDEYIPTPQ (204 aa)) enclose the tr-type G domain. Residues 19 to 26 (GHVDHGKS) are G1. 19-26 (GHVDHGKS) is a binding site for GTP. Ser26 lines the Mg(2+) pocket. A G2 region spans residues 64 to 68 (GITIN). Residues 85 to 88 (DCPG) are G3. GTP is bound by residues 85–89 (DCPGH) and 140–143 (NKCD). The segment at 140-143 (NKCD) is G4. Positions 178–180 (SAL) are G5.

The protein belongs to the TRAFAC class translation factor GTPase superfamily. Classic translation factor GTPase family. EF-Tu/EF-1A subfamily. Monomer.

The protein resides in the cytoplasm. The enzyme catalyses GTP + H2O = GDP + phosphate + H(+). In terms of biological role, GTP hydrolase that promotes the GTP-dependent binding of aminoacyl-tRNA to the A-site of ribosomes during protein biosynthesis. The sequence is that of Elongation factor Tu from Aquifex aeolicus (strain VF5).